The sequence spans 543 residues: Terpineol synthase, chloroplastic (543 aa).

Residues 1–22 are disordered; the sequence is MNTEPSPNHYSAISSSDQNLTR. Arg263, Asp300, Asp304, Arg435, and Asn438 together coordinate (2E)-geranyl diphosphate. 2 residues coordinate Mg(2+): Asp300 and Asp304. The DDXXD motif motif lies at 300 to 304; that stretch reads DDVYD. Residues Asn438, Thr442, and Glu446 each coordinate Mg(2+).

The protein belongs to the terpene synthase family. Tpsb subfamily. As to quaternary structure, monomer. Mg(2+) is required as a cofactor. It depends on Mn(2+) as a cofactor. As to expression, confined to flowers.

Its subcellular location is the plastid. It localises to the chloroplast. The catalysed reaction is (2E)-geranyl diphosphate + H2O = (S)-alpha-terpineol + diphosphate. It carries out the reaction (2E)-geranyl diphosphate = sabinene + diphosphate. It catalyses the reaction (2E)-geranyl diphosphate = beta-myrcene + diphosphate. The enzyme catalyses (2E)-geranyl diphosphate = limonene + diphosphate. The catalysed reaction is (2E)-geranyl diphosphate + H2O = 1,8-cineole + diphosphate. The protein operates within secondary metabolite biosynthesis; terpenoid biosynthesis. Functionally, monoterpene synthase (TPS) involved in the biosynthesis of monoterpene natural products of the 'cineole cassette', volatile compounds present in floral scent. Catalyzes the conversion of (2E)-geranyl diphosphate (GPP) into alpha-terpineol and, as minor products, sabinene, beta-myrcene, limonene and 1,8-cineole. This Nicotiana alata (Winged tobacco) protein is Terpineol synthase, chloroplastic.